The primary structure comprises 754 residues: 5-methyltetrahydropteroyltriglutamate--homocysteine methyltransferase (754 aa).

5-methyltetrahydropteroyltri-L-glutamate is bound by residues 19–22 (RELK) and lysine 121. L-homocysteine-binding positions include 423–425 (IGS) and glutamate 476. L-methionine is bound by residues 423–425 (IGS) and glutamate 476. 5-methyltetrahydropteroyltri-L-glutamate-binding positions include 507-508 (RC) and tryptophan 553. Aspartate 591 contributes to the L-homocysteine binding site. Aspartate 591 contributes to the L-methionine binding site. Glutamate 597 lines the 5-methyltetrahydropteroyltri-L-glutamate pocket. Zn(2+) contacts are provided by histidine 633, cysteine 635, and glutamate 657. The Proton donor role is filled by histidine 686. Cysteine 718 is a Zn(2+) binding site.

Belongs to the vitamin-B12 independent methionine synthase family. Requires Zn(2+) as cofactor.

It catalyses the reaction 5-methyltetrahydropteroyltri-L-glutamate + L-homocysteine = tetrahydropteroyltri-L-glutamate + L-methionine. It functions in the pathway amino-acid biosynthesis; L-methionine biosynthesis via de novo pathway; L-methionine from L-homocysteine (MetE route): step 1/1. In terms of biological role, catalyzes the transfer of a methyl group from 5-methyltetrahydrofolate to homocysteine resulting in methionine formation. This Corynebacterium efficiens (strain DSM 44549 / YS-314 / AJ 12310 / JCM 11189 / NBRC 100395) protein is 5-methyltetrahydropteroyltriglutamate--homocysteine methyltransferase.